The primary structure comprises 173 residues: MSDTATTEGTPAGDPTPVVTDKPLEPTPKTYDEAYVKELRQEAAAARVAKKDAVEAAVKAANDAHTAELAARDTRITELENELGQAWIRLQKLETSLAAKVPSDKVLAFVDILQGEDADSIAESAKKNLELIGGFDKKPVSGFDPTQGFGGRQELPLNGDPILNAMKGVLGIK.

Residues methionine 1–threonine 30 form a disordered region. The stretch at valine 36–alanine 56 forms a coiled coil.

The protein belongs to the L5likevirus scaffolding protein family.

Its function is as follows. Scaffolding protein involved in the icosahedric procapsid assembly. Coassembles with the capsid proteins to form the procapsid, in which the scaffolding protein is found within the external shell of icosahedrally arranged capsid protein subunits. This chain is Probable capsid assembly scaffolding protein (16), found in Mycobacterium (Mycobacteriophage D29).